Reading from the N-terminus, the 729-residue chain is DNA topoisomerase 3 (729 aa).

Residues 3 to 136 (KSVVIAEKPS…IKRLWISSVT (134 aa)) enclose the Toprim domain. Glu9 and Asp105 together coordinate Mg(2+). The region spanning 153–594 (YDNLYASAVA…EMKNYTKEIV (442 aa)) is the Topo IA-type catalytic domain. Residues 187-192 (NCGRVQ) form an interaction with DNA region. The active-site O-(5'-phospho-DNA)-tyrosine intermediate is Tyr310. Residues 686 to 713 (ERRKKESGNKADKRDVQKYMKQQNKEEE) are compositionally biased toward basic and acidic residues. A disordered region spans residues 686 to 719 (ERRKKESGNKADKRDVQKYMKQQNKEEEPLNNPF).

It belongs to the type IA topoisomerase family. It depends on Mg(2+) as a cofactor.

It carries out the reaction ATP-independent breakage of single-stranded DNA, followed by passage and rejoining.. Releases the supercoiling and torsional tension of DNA, which is introduced during the DNA replication and transcription, by transiently cleaving and rejoining one strand of the DNA duplex. Introduces a single-strand break via transesterification at a target site in duplex DNA. The scissile phosphodiester is attacked by the catalytic tyrosine of the enzyme, resulting in the formation of a DNA-(5'-phosphotyrosyl)-enzyme intermediate and the expulsion of a 3'-OH DNA strand. The free DNA strand then undergoes passage around the unbroken strand, thus removing DNA supercoils. Finally, in the religation step, the DNA 3'-OH attacks the covalent intermediate to expel the active-site tyrosine and restore the DNA phosphodiester backbone. This is DNA topoisomerase 3 from Bacillus cereus (strain ATCC 14579 / DSM 31 / CCUG 7414 / JCM 2152 / NBRC 15305 / NCIMB 9373 / NCTC 2599 / NRRL B-3711).